The sequence spans 263 residues: S-acyl fatty acid synthase thioesterase, medium chain (263 aa).

Met-1 bears the N-acetylmethionine mark. Catalysis depends on residues Ser-101 and His-237. An important for interaction with FASN region spans residues 262 to 263 (LT).

Belongs to the thioesterase family. Interacts (via C-terminus) with FASN.

The protein localises to the cytoplasm. Its subcellular location is the cytosol. The catalysed reaction is (9Z)-octadecenoyl-[ACP] + H2O = (9Z)-octadecenoate + holo-[ACP] + H(+). It carries out the reaction decanoyl-CoA + H2O = decanoate + CoA + H(+). The enzyme catalyses dodecanoyl-CoA + H2O = dodecanoate + CoA + H(+). It catalyses the reaction tetradecanoyl-CoA + H2O = tetradecanoate + CoA + H(+). The catalysed reaction is hexadecanoyl-CoA + H2O = hexadecanoate + CoA + H(+). Functionally, contributes to the release of free fatty acids from fatty acid synthase (FASN). Has broad substrate specificity, giving rise to a range of free fatty acids with chain lengths between 10 and 16 carbon atoms (C10 - C16). The sequence is that of S-acyl fatty acid synthase thioesterase, medium chain from Rattus norvegicus (Rat).